Reading from the N-terminus, the 447-residue chain is Na(+)-translocating NADH-quinone reductase subunit A (447 aa).

It belongs to the NqrA family. As to quaternary structure, composed of six subunits; NqrA, NqrB, NqrC, NqrD, NqrE and NqrF.

The enzyme catalyses a ubiquinone + n Na(+)(in) + NADH + H(+) = a ubiquinol + n Na(+)(out) + NAD(+). Its function is as follows. NQR complex catalyzes the reduction of ubiquinone-1 to ubiquinol by two successive reactions, coupled with the transport of Na(+) ions from the cytoplasm to the periplasm. NqrA to NqrE are probably involved in the second step, the conversion of ubisemiquinone to ubiquinol. This chain is Na(+)-translocating NADH-quinone reductase subunit A, found in Neisseria meningitidis serogroup C / serotype 2a (strain ATCC 700532 / DSM 15464 / FAM18).